The chain runs to 69 residues: uncharacterized protein (69 aa).

At 1–15 (MLLYIVIIVACIISK) the chain is on the cytoplasmic side. Residues 16–36 (LVPNEYWAIHLFFIIMIFMVY) form a helical membrane-spanning segment. Residues 37–69 (MYKKLDIHQKYQFWNYTMSGLSGHNVQVTCKCY) are Extracellular-facing. A glycan (N-linked (GlcNAc...) asparagine; by host) is linked at N51.

The protein belongs to the asfivirus X69R family.

The protein resides in the host membrane. This is an uncharacterized protein from African swine fever virus (isolate Tick/Malawi/Lil 20-1/1983) (ASFV).